The chain runs to 303 residues: Probable cell division protein WhiA (303 aa).

Residues 272–303 (SIQQLADSLSTPLTKSGVNHRLRKINKIADEL) constitute a DNA-binding region (H-T-H motif).

Belongs to the WhiA family.

Its function is as follows. Involved in cell division and chromosome segregation. This chain is Probable cell division protein WhiA, found in Streptococcus pneumoniae serotype 4 (strain ATCC BAA-334 / TIGR4).